A 274-amino-acid polypeptide reads, in one-letter code: Putative ankyrin repeat protein R597 (274 aa).

ANK repeat units follow at residues 78–112 (VGLP…NNND), 114–144 (PISE…SLKI), 146–174 (SRYH…DIQG), and 176–205 (NLSY…NIND).

This chain is Putative ankyrin repeat protein R597, found in Acanthamoeba polyphaga mimivirus (APMV).